Consider the following 435-residue polypeptide: ATP-dependent protease ATPase subunit HslU (435 aa).

ATP-binding positions include isoleucine 18, 60 to 65 (GVGKTE), aspartate 248, glutamate 313, and arginine 385.

This sequence belongs to the ClpX chaperone family. HslU subfamily. In terms of assembly, a double ring-shaped homohexamer of HslV is capped on each side by a ring-shaped HslU homohexamer. The assembly of the HslU/HslV complex is dependent on binding of ATP.

The protein localises to the cytoplasm. Functionally, ATPase subunit of a proteasome-like degradation complex; this subunit has chaperone activity. The binding of ATP and its subsequent hydrolysis by HslU are essential for unfolding of protein substrates subsequently hydrolyzed by HslV. HslU recognizes the N-terminal part of its protein substrates and unfolds these before they are guided to HslV for hydrolysis. This chain is ATP-dependent protease ATPase subunit HslU, found in Agrobacterium fabrum (strain C58 / ATCC 33970) (Agrobacterium tumefaciens (strain C58)).